Here is a 273-residue protein sequence, read N- to C-terminus: Large ribosomal subunit protein uL2 (273 aa).

The disordered stretch occupies residues 228-273 (IDHPHGGGEGKTSGGRHPVTPWGFSTKGKKTRKNKRTSKFIVKKRK). Over residues 254–273 (KGKKTRKNKRTSKFIVKKRK) the composition is skewed to basic residues.

Belongs to the universal ribosomal protein uL2 family. In terms of assembly, part of the 50S ribosomal subunit. Forms a bridge to the 30S subunit in the 70S ribosome.

In terms of biological role, one of the primary rRNA binding proteins. Required for association of the 30S and 50S subunits to form the 70S ribosome, for tRNA binding and peptide bond formation. It has been suggested to have peptidyltransferase activity; this is somewhat controversial. Makes several contacts with the 16S rRNA in the 70S ribosome. This Rickettsia typhi (strain ATCC VR-144 / Wilmington) protein is Large ribosomal subunit protein uL2.